The following is a 189-amino-acid chain: Interferon alpha-12 (189 aa).

The N-terminal stretch at 1–23 (MARLCAFLMTLLVMSYWSTCSLG) is a signal peptide. Intrachain disulfides connect Cys-24/Cys-122 and Cys-52/Cys-162. A glycan (N-linked (GlcNAc...) asparagine) is linked at Asn-101.

It belongs to the alpha/beta interferon family.

The protein resides in the secreted. Functionally, produced by macrophages, IFN-alpha have antiviral activities. Interferon stimulates the production of two enzymes: a protein kinase and an oligoadenylate synthetase. The chain is Interferon alpha-12 (Ifna12) from Mus musculus (Mouse).